Here is a 614-residue protein sequence, read N- to C-terminus: Signal recognition particle receptor subunit alpha homolog (614 aa).

Residues 119 to 244 (EASAKQVKAP…DRSRDSPDDV (126 aa)) form a disordered region. The segment covering 149–160 (QDDKKPVEKRVN) has biased composition (basic and acidic residues). Positions 164-178 (APPPSKSQPSSPPTG) are enriched in pro residues. Positions 232–241 (ALLDRSRDSP) are enriched in basic and acidic residues. 2 positions are modified to phosphoserine: Ser-237 and Ser-240. Tyr-246 carries the phosphotyrosine modification. 3 positions are modified to phosphoserine: Ser-268, Ser-278, and Ser-279. Over residues 268–285 (SEDEADNEDASSEGEAEE) the composition is skewed to acidic residues. Positions 268–290 (SEDEADNEDASSEGEAEEQVQSK) are disordered. The segment at 396–613 (YTIIFCGVNG…NVNAVVNSLM (218 aa)) is NG domain. GTP-binding positions include 402–409 (GVNGVGKS), 497–501 (DTAGR), and 565–568 (TKFD).

It belongs to the GTP-binding SRP family. In terms of assembly, heterodimer of SrpRalpha and SrpRbeta. In 8-9 hours embryos, expression is seen in a segmental pattern along embryonic ventral midline.

Its subcellular location is the endoplasmic reticulum membrane. Functionally, component of the SRP (signal recognition particle) receptor. Ensures, in conjunction with the signal recognition particle, the correct targeting of the nascent secretory proteins to the endoplasmic reticulum membrane system. Forms a guanosine 5'-triphosphate (GTP)-dependent complex with the SRP subunit Srp54. SRP receptor compaction and GTPase rearrangement drive SRP-mediated cotranslational protein translocation into the ER. May have a role in axonogenesis. The chain is Signal recognition particle receptor subunit alpha homolog from Drosophila melanogaster (Fruit fly).